Reading from the N-terminus, the 1201-residue chain is HEAT repeat-containing protein 6 (1201 aa).

The tract at residues 1-25 (MAGKVTFLGSNSSFSPDGKTQGFKS) is disordered. An HEAT 1 repeat occupies 182 to 221 (PDLLGPSGVLVKYGDPKQPDIELRRSAVHCIANLCLSVPS). Residues 321-390 (AVKPEPAQDT…SQSSMLTSPS (70 aa)) are disordered. The segment covering 341–352 (QKKRKSRGKGKK) has biased composition (basic residues). Residues 375-390 (SGWSHGSQSSMLTSPS) are compositionally biased toward polar residues. HEAT repeat units follow at residues 460–498 (GIGG…GSRQ), 523–560 (SIRE…NVPY), and 566–603 (GLLS…TQAP). Over residues 618–633 (SSLGSGISTPQESPLS) the composition is skewed to polar residues. Residues 618–653 (SSLGSGISTPQESPLSWRQPARRDEEASSPAAAEGP) form a disordered region.

The polypeptide is HEAT repeat-containing protein 6 (heatr6) (Danio rerio (Zebrafish)).